The primary structure comprises 27 residues: Cationic protein C1 (27 aa).

The protein resides in the secreted. It localises to the nematocyst. In Bunodosoma caissarum (Sea anemone), this protein is Cationic protein C1.